A 136-amino-acid chain; its full sequence is Interleukin-13 (136 aa).

The signal sequence occupies residues Met-1 to Ala-18. Residues Asn-38, Asn-49, Asn-57, Asn-72, Asn-75, and Asn-131 are each glycosylated (N-linked (GlcNAc...) asparagine). 2 cysteine pairs are disulfide-bonded: Cys-48–Cys-76 and Cys-64–Cys-90.

The protein belongs to the IL-4/IL-13 family. Interacts with IL13RA2.

It is found in the secreted. Functionally, cytokine that plays important roles in allergic inflammation and immune response to parasite infection. Synergizes with IL2 in regulating interferon-gamma synthesis. Stimulates B-cell proliferation, and activation of eosinophils, basophils, and mast cells. Plays an important role in controlling IL33 activity by modulating the production of transmembrane and soluble forms of interleukin-1 receptor-like 1/IL1RL1. Displays the capacity to antagonize Th1-driven proinflammatory immune response and downregulates synthesis of many proinflammatory cytokines including IL1, IL6, IL10, IL12 and TNF-alpha through a mechanism that partially involves suppression of NF-kappa-B. Also functions on nonhematopoietic cells, including endothelial cells where it induces vascular cell adhesion protein 1/VCAM1, which is important in the recruitment of eosinophils. Exerts its biological effects through its receptors which comprises the IL4R chain and the IL13RA1 chain, to activate JAK1 and TYK2, leading to the activation of STAT6. Aside from IL13RA1, another receptor IL13RA2 acts as a high affinity decoy for IL13 and mediates internalization and depletion of extracellular IL13. This chain is Interleukin-13 (IL13), found in Camelus bactrianus (Bactrian camel).